A 355-amino-acid polypeptide reads, in one-letter code: C-C chemokine receptor type 3 (355 aa).

The Extracellular segment spans residues 1 to 34 (MTTSLDTVETFGPTSYDDDMGLLCEKADVGALIA). A helical transmembrane segment spans residues 35 to 62 (QFVPPLYSLVFMVGLLGNVVVVMILIKY). Residues 63–72 (RRLRIMTNIY) lie on the Cytoplasmic side of the membrane. The helical transmembrane segment at 73–93 (LLNLAISDLLFLFTLPFWIHY) threads the bilayer. At 94–107 (VRERNWVFSHGMCK) the chain is on the extracellular side. Cys106 and Cys183 are disulfide-bonded. The chain crosses the membrane as a helical span at residues 108–129 (VLSGFYHTGLYSEIFFIILLTI). The Cytoplasmic segment spans residues 130-146 (DRYLAIVHAVFALRART). Residues 147-171 (VTFGVITSIVTWGLAVLAALPEFIF) form a helical membrane-spanning segment. The Extracellular portion of the chain corresponds to 172–203 (YGTEKLFPKTLCSAIYPQDTVYSWRHFHTLKM). The helical transmembrane segment at 204–223 (TILCLALPLLVMAICYTGII) threads the bilayer. Over 224–239 (KTLLRCPSKKKYKAIR) the chain is Cytoplasmic. The helical transmembrane segment at 240–264 (LIFVIMAVFFIFWTPYNVAILISTY) threads the bilayer. The Extracellular portion of the chain corresponds to 265 to 281 (QSVLFGLDCERSKHLDL). A helical transmembrane segment spans residues 282 to 305 (FVLATEVIAYSHCCVNPVIYAFVG). Over 306–355 (ERFRKYLRHFFHRHVLMHLGKYIPFLPSEKLERTSSVSPSTAEPELSIVF) the chain is Cytoplasmic.

This sequence belongs to the G-protein coupled receptor 1 family.

It is found in the cell membrane. Its function is as follows. Receptor for C-C type chemokine. Binds and responds to a variety of chemokines, including CCL11, CCL26, CCL7, CCL13, RANTES(CCL5) and CCL15. Subsequently transduces a signal by increasing the intracellular calcium ions level. In addition acts as a possible functional receptor for NARS1. The polypeptide is C-C chemokine receptor type 3 (CCR3) (Macaca mulatta (Rhesus macaque)).